The following is a 355-amino-acid chain: Guanine nucleotide-binding protein alpha-12 subunit (355 aa).

The 328-residue stretch at 28–355 (RQINLLLLGS…EQNLKTLMMQ (328 aa)) folds into the G-alpha domain. The G1 motif stretch occupies residues 31-44 (NLLLLGSGESGKST). Residues 36 to 43 (GSGESGKS), 176 to 182 (LFCRKAT), 201 to 205 (DVGGQ), 270 to 273 (NKND), and Ala327 each bind GTP. Ser43 and Thr182 together coordinate Mg(2+). The G2 motif stretch occupies residues 174–182 (DILFCRKAT). Positions 197–206 (FRFIDVGGQR) are G3 motif. The segment at 266 to 273 (ILFMNKND) is G4 motif. The interval 325–330 (TTAVDT) is G5 motif.

This sequence belongs to the G-alpha family. In terms of assembly, g proteins are composed of 3 units; alpha, beta and gamma. The alpha chain contains the guanine nucleotide binding site.

Its function is as follows. Guanine nucleotide-binding proteins (G proteins) are involved as modulators or transducers in various transmembrane signaling systems. May play a role in resistance to fungal infection in the epidermis by regulating the up-regulation of several antimicrobial peptides of the NLP and CNC families. Upstream of plc-3, tpa-1 and the p38-like pathway, required for the expression of antimicrobial peptide nlp-29 in the epidermis in response to fungal infection or physical injury. The sequence is that of Guanine nucleotide-binding protein alpha-12 subunit (gpa-12) from Caenorhabditis elegans.